Consider the following 355-residue polypeptide: Peptide chain release factor 1 (355 aa).

Gln233 is subject to N5-methylglutamine.

Belongs to the prokaryotic/mitochondrial release factor family. Post-translationally, methylated by PrmC. Methylation increases the termination efficiency of RF1.

It is found in the cytoplasm. Functionally, peptide chain release factor 1 directs the termination of translation in response to the peptide chain termination codons UAG and UAA. This is Peptide chain release factor 1 from Dehalococcoides mccartyi (strain ATCC BAA-2100 / JCM 16839 / KCTC 5957 / BAV1).